We begin with the raw amino-acid sequence, 287 residues long: 4-diphosphocytidyl-2-C-methyl-D-erythritol kinase (287 aa).

Lysine 10 is an active-site residue. 92–102 (PLAAGLAGGSA) contacts ATP. Aspartate 134 is an active-site residue.

The protein belongs to the GHMP kinase family. IspE subfamily.

The catalysed reaction is 4-CDP-2-C-methyl-D-erythritol + ATP = 4-CDP-2-C-methyl-D-erythritol 2-phosphate + ADP + H(+). It participates in isoprenoid biosynthesis; isopentenyl diphosphate biosynthesis via DXP pathway; isopentenyl diphosphate from 1-deoxy-D-xylulose 5-phosphate: step 3/6. In terms of biological role, catalyzes the phosphorylation of the position 2 hydroxy group of 4-diphosphocytidyl-2C-methyl-D-erythritol. In Caldanaerobacter subterraneus subsp. tengcongensis (strain DSM 15242 / JCM 11007 / NBRC 100824 / MB4) (Thermoanaerobacter tengcongensis), this protein is 4-diphosphocytidyl-2-C-methyl-D-erythritol kinase.